The following is a 1082-amino-acid chain: SURP and G-patch domain-containing protein 2 (1082 aa).

T7 is subject to Phosphothreonine. The tract at residues 65–97 is disordered; the sequence is LSGSVAHSRDAGREGLRSDVFPGPSFRSSNPSI. The span at 71–81 shows a compositional bias: basic and acidic residues; the sequence is HSRDAGREGLR. A phosphoserine mark is found at S96 and S224. K228 is covalently cross-linked (Glycyl lysine isopeptide (Lys-Gly) (interchain with G-Cter in SUMO2)). T275 bears the Phosphothreonine mark. Residue S277 is modified to Phosphoserine. A Glycyl lysine isopeptide (Lys-Gly) (interchain with G-Cter in SUMO2) cross-link involves residue K305. Phosphoserine is present on residues S315, S573, and S603. The stretch at 590–633 is one SURP motif 1 repeat; sequence IDQLVKRVIEGSLSPKERTLLKEDPAYWFLSDENSLEYKYYKLK. A Glycyl lysine isopeptide (Lys-Gly) (interchain with G-Cter in SUMO2) cross-link involves residue K650. The tract at residues 694 to 779 is disordered; sequence RRATTGTQTL…QTSSPCPSAD (86 aa). A compositionally biased stretch (low complexity) spans 697–708; it reads TTGTQTLLSSGT. A compositionally biased stretch (basic and acidic residues) spans 727 to 738; it reads LPDRNDAAKDCP. Phosphoserine is present on residues S754 and S757. One copy of the SURP motif 2 repeat lies at 787–830; the sequence is TAEKLARFVAQVGPEIEQFSIENSTDNPDLWFLHDQNSSAFKFY. 3 disordered regions span residues 849 to 930, 982 to 1002, and 1030 to 1061; these read NLHT…EAAE, RIAY…PKDL, and LGSL…EHKE. S863 is modified (phosphoserine). 2 stretches are compositionally biased toward acidic residues: residues 868-877 and 885-904; these read MEGEAEFEDE and LESP…DGGE. Basic residues predominate over residues 990-999; the sequence is GRPMSKKKKP. Residues 995–1000 carry the Nuclear localization signal motif; it reads KKKKPK. One can recognise a G-patch domain in the interval 1011–1057; the sequence is DKNLGFQMLQKMGWKEGHGLGSLGKGIREPVSVGTPSEGEGLGADGQ.

As to expression, detected in adult testis, and in fetal brain and kidney.

It is found in the nucleus. May play a role in mRNA splicing. In Homo sapiens (Human), this protein is SURP and G-patch domain-containing protein 2 (SUGP2).